Reading from the N-terminus, the 89-residue chain is Small ribosomal subunit protein uS15 (89 aa).

It belongs to the universal ribosomal protein uS15 family. In terms of assembly, part of the 30S ribosomal subunit. Forms a bridge to the 50S subunit in the 70S ribosome, contacting the 23S rRNA.

One of the primary rRNA binding proteins, it binds directly to 16S rRNA where it helps nucleate assembly of the platform of the 30S subunit by binding and bridging several RNA helices of the 16S rRNA. Functionally, forms an intersubunit bridge (bridge B4) with the 23S rRNA of the 50S subunit in the ribosome. This Laribacter hongkongensis (strain HLHK9) protein is Small ribosomal subunit protein uS15.